The sequence spans 160 residues: MFLSTFEKQLDAKRRIVVPQEFRALAAGPFDGVFCFPSIEADCIEGGGKALFDRYNGVIEELEFGDPLRSALETSVLGGMAKLSFDTAGRITLPESLCDLFGLTDWVTIVGLGDRFQIWEREAFNAHRAAQRELARQGLAELRAQQRAARLAHSGQGSAG.

2 consecutive SpoVT-AbrB domains span residues threonine 5–leucine 51 and methionine 80–alanine 123.

This sequence belongs to the MraZ family. As to quaternary structure, forms oligomers.

The protein resides in the cytoplasm. The protein localises to the nucleoid. In Phenylobacterium zucineum (strain HLK1), this protein is Transcriptional regulator MraZ.